A 363-amino-acid polypeptide reads, in one-letter code: Phosphoribosylformylglycinamidine cyclo-ligase (363 aa).

Belongs to the AIR synthase family.

It localises to the cytoplasm. The catalysed reaction is 2-formamido-N(1)-(5-O-phospho-beta-D-ribosyl)acetamidine + ATP = 5-amino-1-(5-phospho-beta-D-ribosyl)imidazole + ADP + phosphate + H(+). It functions in the pathway purine metabolism; IMP biosynthesis via de novo pathway; 5-amino-1-(5-phospho-D-ribosyl)imidazole from N(2)-formyl-N(1)-(5-phospho-D-ribosyl)glycinamide: step 2/2. The protein is Phosphoribosylformylglycinamidine cyclo-ligase of Parvibaculum lavamentivorans (strain DS-1 / DSM 13023 / NCIMB 13966).